We begin with the raw amino-acid sequence, 337 residues long: Cytoskeleton protein RodZ (337 aa).

At 1-111 (MNTEATHDQN…LGKRRKKRDG (111 aa)) the chain is on the cytoplasmic side. The HTH cro/C1-type domain occupies 19–71 (LRNAREQLGLSQQAVAERLCLKVSTVRDIEEDKAPADLASTFLRGYIRSYARL). The H-T-H motif DNA-binding region spans 30–49 (QQAVAERLCLKVSTVRDIEE). Residues 112-132 (WLMTFTWLVLFVVIGLSGAWW) form a helical; Signal-anchor for type II membrane protein membrane-spanning segment. The Periplasmic portion of the chain corresponds to 133–337 (WQDHKAQQEE…TLNAEQSPAQ (205 aa)). The segment covering 145–167 (TMADQSSAELSSNSEQGQSVPLN) has biased composition (polar residues). Positions 145–236 (TMADQSSAEL…TAATTPDGAA (92 aa)) are disordered. The span at 168 to 207 (TSTTTDPATTSTPPASVDTTATNTQTPAVTAPAPAVDPQQ) shows a compositional bias: low complexity. Polar residues predominate over residues 208-218 (NAVVSPSQANV). The segment covering 219–236 (DTAATPAPTAATTPDGAA) has biased composition (low complexity).

Belongs to the RodZ family.

It localises to the cell inner membrane. Functionally, cytoskeletal protein that is involved in cell-shape control through regulation of the length of the long axis. The protein is Cytoskeleton protein RodZ of Escherichia coli O139:H28 (strain E24377A / ETEC).